Here is an 882-residue protein sequence, read N- to C-terminus: MQTRVSSPFISRALSSSSNLNELRRIHALVISLGLDSSDFFSGKLIDKYSHFREPASSLSVFRRVSPAKNVYLWNSIIRAFSKNGLFPEALEFYGKLRESKVSPDKYTFPSVIKACAGLFDAEMGDLVYEQILDMGFESDLFVGNALVDMYSRMGLLTRARQVFDEMPVRDLVSWNSLISGYSSHGYYEEALEIYHELKNSWIVPDSFTVSSVLPAFGNLLVVKQGQGLHGFALKSGVNSVVVVNNGLVAMYLKFRRPTDARRVFDEMDVRDSVSYNTMICGYLKLEMVEESVRMFLENLDQFKPDLLTVSSVLRACGHLRDLSLAKYIYNYMLKAGFVLESTVRNILIDVYAKCGDMITARDVFNSMECKDTVSWNSIISGYIQSGDLMEAMKLFKMMMIMEEQADHITYLMLISVSTRLADLKFGKGLHSNGIKSGICIDLSVSNALIDMYAKCGEVGDSLKIFSSMGTGDTVTWNTVISACVRFGDFATGLQVTTQMRKSEVVPDMATFLVTLPMCASLAAKRLGKEIHCCLLRFGYESELQIGNALIEMYSKCGCLENSSRVFERMSRRDVVTWTGMIYAYGMYGEGEKALETFADMEKSGIVPDSVVFIAIIYACSHSGLVDEGLACFEKMKTHYKIDPMIEHYACVVDLLSRSQKISKAEEFIQAMPIKPDASIWASVLRACRTSGDMETAERVSRRIIELNPDDPGYSILASNAYAALRKWDKVSLIRKSLKDKHITKNPGYSWIEVGKNVHVFSSGDDSAPQSEAIYKSLEILYSLMAKEGYIPDPREVSQNLEEEEEKRRLICGHSERLAIAFGLLNTEPGTPLQVMKNLRVCGDCHEVTKLISKIVGREILVRDANRFHLFKDGTCSCKDRW.

PPR repeat units follow at residues 3–37 (TRVSSPFISRALSSSSNLNELRRIHALVISLGLDS), 38–68 (SDFFSGKLIDKYSHFREPASSLSVFRRVSPA), 70–104 (NVYLWNSIIRAFSKNGLFPEALEFYGKLRESKVSP), 105–139 (DKYTFPSVIKACAGLFDAEMGDLVYEQILDMGFES), 140–170 (DLFVGNALVDMYSRMGLLTRARQVFDEMPVR), 171–205 (DLVSWNSLISGYSSHGYYEEALEIYHELKNSWIVP), 206–240 (DSFTVSSVLPAFGNLLVVKQGQGLHGFALKSGVNS), 241–271 (VVVVNNGLVAMYLKFRRPTDARRVFDEMDVR), 272–307 (DSVSYNTMICGYLKLEMVEESVRMFLENLDQFKPDL), 309–340 (TVSSVLRACGHLRDLSLAKYIYNYMLKAGFVL), 341–371 (ESTVRNILIDVYAKCGDMITARDVFNSMECK), 372–406 (DTVSWNSIISGYIQSGDLMEAMKLFKMMMIMEEQA), 407–441 (DHITYLMLISVSTRLADLKFGKGLHSNGIKSGICI), 442–472 (DLSVSNALIDMYAKCGEVGDSLKIFSSMGTG), 473–507 (DTVTWNTVISACVRFGDFATGLQVTTQMRKSEVVP), 508–542 (DMATFLVTLPMCASLAAKRLGKEIHCCLLRFGYES), 543–573 (ELQIGNALIEMYSKCGCLENSSRVFERMSRR), 574–608 (DVVTWTGMIYAYGMYGEGEKALETFADMEKSGIVP), 609–639 (DSVVFIAIIYACSHSGLVDEGLACFEKMKTH), and 645–675 (MIEHYACVVDLLSRSQKISKAEEFIQAMPIK). The type E motif stretch occupies residues 680-755 (IWASVLRACR…NPGYSWIEVG (76 aa)). Positions 756–786 (KNVHVFSSGDDSAPQSEAIYKSLEILYSLMA) are type E(+) motif. The interval 787–882 (KEGYIPDPRE…DGTCSCKDRW (96 aa)) is type DYW motif.

This sequence belongs to the PPR family. PCMP-H subfamily.

This chain is Pentatricopeptide repeat-containing protein At3g03580 (PCMP-H23), found in Arabidopsis thaliana (Mouse-ear cress).